We begin with the raw amino-acid sequence, 749 residues long: Putative Xaa-Pro aminopeptidase FRA1 (749 aa).

The tract at residues 1 to 33 (MTSKPSTSDGRAHSISHVPGTHMRGTSASHSPR) is disordered. Ser69, Ser92, and Ser95 each carry phosphoserine. Residues Asp551, Asp562, Glu660, and Glu674 each coordinate Mn(2+).

The protein belongs to the peptidase M24B family. In terms of assembly, homodimer. Interacts with FRA2. Requires Mn(2+) as cofactor.

The protein localises to the cytoplasm. It catalyses the reaction Release of any N-terminal amino acid, including proline, that is linked to proline, even from a dipeptide or tripeptide.. Its function is as follows. Involved in the regulation of the iron regulon in responss to decreased mitochondrial iron-sulfur cluster synthesis. This Saccharomyces cerevisiae (strain ATCC 204508 / S288c) (Baker's yeast) protein is Putative Xaa-Pro aminopeptidase FRA1 (FRA1).